A 220-amino-acid polypeptide reads, in one-letter code: Adenylate kinase (220 aa).

10–15 is a binding site for ATP; sequence GAGKGT. The segment at 30 to 59 is NMP; sequence STGDLFRANISQQTELGKLAKSYMDEGNLV. AMP-binding positions include T31, R36, 57 to 59, 85 to 88, and Q92; these read NLV and GFPR. The interval 126 to 164 is LID; the sequence is GRRICRNDSAHVFHVSYKPPKQEGVCDVCGGELYQRDDD. Residues R127 and 137–138 contribute to the ATP site; that span reads VF. AMP is bound by residues R161 and R172. Residue G200 participates in ATP binding.

The protein belongs to the adenylate kinase family. Monomer.

It is found in the cytoplasm. It catalyses the reaction AMP + ATP = 2 ADP. Its pathway is purine metabolism; AMP biosynthesis via salvage pathway; AMP from ADP: step 1/1. Its function is as follows. Catalyzes the reversible transfer of the terminal phosphate group between ATP and AMP. Plays an important role in cellular energy homeostasis and in adenine nucleotide metabolism. In Streptomyces avermitilis (strain ATCC 31267 / DSM 46492 / JCM 5070 / NBRC 14893 / NCIMB 12804 / NRRL 8165 / MA-4680), this protein is Adenylate kinase.